The chain runs to 150 residues: Deoxyuridine 5'-triphosphate nucleotidohydrolase (150 aa).

Residues 69–71 (RSG), N82, 86–88 (LID), and M96 contribute to the substrate site.

The protein belongs to the dUTPase family. The cofactor is Mg(2+).

It catalyses the reaction dUTP + H2O = dUMP + diphosphate + H(+). Its pathway is pyrimidine metabolism; dUMP biosynthesis; dUMP from dCTP (dUTP route): step 2/2. This enzyme is involved in nucleotide metabolism: it produces dUMP, the immediate precursor of thymidine nucleotides and it decreases the intracellular concentration of dUTP so that uracil cannot be incorporated into DNA. The protein is Deoxyuridine 5'-triphosphate nucleotidohydrolase of Acinetobacter baylyi (strain ATCC 33305 / BD413 / ADP1).